A 144-amino-acid chain; its full sequence is Large ribosomal subunit protein uL15 (144 aa).

A disordered region spans residues 1–25; that stretch reads MFLNTIGARDGSRPEKKRVGRGIGS.

The protein belongs to the universal ribosomal protein uL15 family. As to quaternary structure, part of the 50S ribosomal subunit.

Its function is as follows. Binds to the 23S rRNA. This is Large ribosomal subunit protein uL15 from Methylococcus capsulatus (strain ATCC 33009 / NCIMB 11132 / Bath).